A 485-amino-acid chain; its full sequence is GlcNAc-binding protein A (485 aa).

A signal peptide spans 1–29 (MKKQPQKTLLAIALSVVSGTAMSHGYVSA). A Chitin-binding type-4 domain is found at 30–200 (VENGVAEARV…SFYNVIDVKF (171 aa)). The 42-residue stretch at 437-478 (AGTKVLASDGAIYQCKPFPYSGYCVQWTPTATQYQPGTGSHW) folds into the Chitin-binding type-3 domain.

The protein belongs to the GbpA family.

It localises to the secreted. Its function is as follows. Probably interacts with GlcNAc residues. May promote attachment to both epithelial cell surfaces and chitin. The polypeptide is GlcNAc-binding protein A (Vibrio vulnificus (strain YJ016)).